A 307-amino-acid chain; its full sequence is Ribonuclease Z (307 aa).

Residues histidine 62, histidine 64, aspartate 66, histidine 67, histidine 139, aspartate 210, and histidine 268 each contribute to the Zn(2+) site. Aspartate 66 functions as the Proton acceptor in the catalytic mechanism.

This sequence belongs to the RNase Z family. As to quaternary structure, homodimer. It depends on Zn(2+) as a cofactor.

It carries out the reaction Endonucleolytic cleavage of RNA, removing extra 3' nucleotides from tRNA precursor, generating 3' termini of tRNAs. A 3'-hydroxy group is left at the tRNA terminus and a 5'-phosphoryl group is left at the trailer molecule.. Zinc phosphodiesterase, which displays some tRNA 3'-processing endonuclease activity. Probably involved in tRNA maturation, by removing a 3'-trailer from precursor tRNA. The protein is Ribonuclease Z of Myxococcus xanthus (strain DK1622).